Reading from the N-terminus, the 119-residue chain is Ribosome-binding factor A (119 aa).

The protein belongs to the RbfA family. Monomer. Binds 30S ribosomal subunits, but not 50S ribosomal subunits or 70S ribosomes.

It localises to the cytoplasm. In terms of biological role, one of several proteins that assist in the late maturation steps of the functional core of the 30S ribosomal subunit. Associates with free 30S ribosomal subunits (but not with 30S subunits that are part of 70S ribosomes or polysomes). Required for efficient processing of 16S rRNA. May interact with the 5'-terminal helix region of 16S rRNA. The sequence is that of Ribosome-binding factor A from Geobacter sp. (strain M21).